Consider the following 49-residue polypeptide: Small integral membrane protein 27 (49 aa).

The chain crosses the membrane as a helical span at residues Trp-11–Ala-31.

The protein localises to the membrane. This Mus musculus (Mouse) protein is Small integral membrane protein 27.